We begin with the raw amino-acid sequence, 135 residues long: MKSKKQARAACPCGGGELAACCGRYLGPDASPAPTAQALMRSRYSAYALGLEDYLLATWHPSTRPEALHLDEDAGVVKWIGLEVKRCEAGSERDAEGVVEFVARCKVGGKAERMHETSRFLREDGRWYYVSGLVA.

The protein belongs to the UPF0225 family.

The polypeptide is UPF0225 protein CV_3559 (Chromobacterium violaceum (strain ATCC 12472 / DSM 30191 / JCM 1249 / CCUG 213 / NBRC 12614 / NCIMB 9131 / NCTC 9757 / MK)).